The primary structure comprises 555 residues: Glutamate--tRNA ligase (555 aa).

The 'HIGH' region signature appears at 100–110 (PNPSGPLHIGH).

This sequence belongs to the class-I aminoacyl-tRNA synthetase family. Glutamate--tRNA ligase type 2 subfamily.

The protein resides in the cytoplasm. The catalysed reaction is tRNA(Glu) + L-glutamate + ATP = L-glutamyl-tRNA(Glu) + AMP + diphosphate. Catalyzes the attachment of glutamate to tRNA(Glu) in a two-step reaction: glutamate is first activated by ATP to form Glu-AMP and then transferred to the acceptor end of tRNA(Glu). This Methanococcus maripaludis (strain C5 / ATCC BAA-1333) protein is Glutamate--tRNA ligase.